The chain runs to 257 residues: 1-(5-phosphoribosyl)-5-[(5-phosphoribosylamino)methylideneamino] imidazole-4-carboxamide isomerase (257 aa).

Aspartate 8 acts as the Proton acceptor in catalysis. Catalysis depends on aspartate 129, which acts as the Proton donor.

Belongs to the HisA/HisF family.

It localises to the cytoplasm. The enzyme catalyses 1-(5-phospho-beta-D-ribosyl)-5-[(5-phospho-beta-D-ribosylamino)methylideneamino]imidazole-4-carboxamide = 5-[(5-phospho-1-deoxy-D-ribulos-1-ylimino)methylamino]-1-(5-phospho-beta-D-ribosyl)imidazole-4-carboxamide. It functions in the pathway amino-acid biosynthesis; L-histidine biosynthesis; L-histidine from 5-phospho-alpha-D-ribose 1-diphosphate: step 4/9. In Acaryochloris marina (strain MBIC 11017), this protein is 1-(5-phosphoribosyl)-5-[(5-phosphoribosylamino)methylideneamino] imidazole-4-carboxamide isomerase.